The primary structure comprises 319 residues: Sphingomyelinase D (319 aa).

The signal sequence occupies residues 1–23 (MTPLLRTICAILCILIAVPLTFA). H44 is a catalytic residue. 3 residues coordinate Mg(2+): E64, D66, and D109. Positions 312–319 (ATGADKPW) match the SMD-tail motif.

The protein belongs to the sphingomyelinase D/phospholipase D family. Mg(2+) is required as a cofactor.

Its subcellular location is the secreted. The catalysed reaction is a sphingomyelin + H2O = an N-acylsphing-4-enine 1-phosphate + choline + H(+). In terms of biological role, catalyzes the hydrolysis of sphingomyelin. Sphingomyelinases D are produced by some spider in their venoms, but also by arthropods such as ticks, or pathogenic bacteria and fungi. They might play a role in pathogenicity through different mechanisms, such as membrane destabilization and host cell penetration, but also pulmonary inflammation and cutaneous lesions. The chain is Sphingomyelinase D from Ajellomyces capsulatus (strain G186AR / H82 / ATCC MYA-2454 / RMSCC 2432) (Darling's disease fungus).